We begin with the raw amino-acid sequence, 603 residues long: Cholinesterase (603 aa).

An N-terminal signal peptide occupies residues 1–29 (MQTQHTKVTQTHFLLWILLLCMPFGKSHT). N-linked (GlcNAc...) asparagine glycosylation is present at Asn86. Residues Cys94 and Cys121 are joined by a disulfide bond. Asn135 is a glycosylation site (N-linked (GlcNAc...) asparagine). 145–146 (GG) is a substrate binding site. Ser227 (acyl-ester intermediate) is an active-site residue. Phosphoserine is present on Ser227. Residue Asn270 is glycosylated (N-linked (GlcNAc...) asparagine). A disulfide bond links Cys281 and Cys292. The active-site Charge relay system is Glu354. A glycan (N-linked (GlcNAc...) asparagine) is linked at Asn370. An intrachain disulfide couples Cys429 to Cys548. His467 serves as the catalytic Charge relay system. N-linked (GlcNAc...) asparagine glycans are attached at residues Asn484, Asn510, and Asn515.

This sequence belongs to the type-B carboxylesterase/lipase family. Homotetramer; disulfide-linked. Dimer of dimers. Present in most cells except erythrocytes.

It localises to the secreted. It carries out the reaction an acylcholine + H2O = a carboxylate + choline + H(+). Its function is as follows. Esterase with broad substrate specificity. Contributes to the inactivation of the neurotransmitter acetylcholine. Can degrade neurotoxic organophosphate esters. This chain is Cholinesterase (Bche), found in Mus musculus (Mouse).